The chain runs to 211 residues: Imidazole glycerol phosphate synthase subunit HisH (211 aa).

The 208-residue stretch at 4 to 211 (TVALLDYGSG…QLLRNWINHI (208 aa)) folds into the Glutamine amidotransferase type-1 domain. Cys82 (nucleophile) is an active-site residue. Residues His192 and Glu194 contribute to the active site.

In terms of assembly, heterodimer of HisH and HisF.

The protein resides in the cytoplasm. The enzyme catalyses 5-[(5-phospho-1-deoxy-D-ribulos-1-ylimino)methylamino]-1-(5-phospho-beta-D-ribosyl)imidazole-4-carboxamide + L-glutamine = D-erythro-1-(imidazol-4-yl)glycerol 3-phosphate + 5-amino-1-(5-phospho-beta-D-ribosyl)imidazole-4-carboxamide + L-glutamate + H(+). The catalysed reaction is L-glutamine + H2O = L-glutamate + NH4(+). It functions in the pathway amino-acid biosynthesis; L-histidine biosynthesis; L-histidine from 5-phospho-alpha-D-ribose 1-diphosphate: step 5/9. IGPS catalyzes the conversion of PRFAR and glutamine to IGP, AICAR and glutamate. The HisH subunit catalyzes the hydrolysis of glutamine to glutamate and ammonia as part of the synthesis of IGP and AICAR. The resulting ammonia molecule is channeled to the active site of HisF. The chain is Imidazole glycerol phosphate synthase subunit HisH from Corynebacterium efficiens (strain DSM 44549 / YS-314 / AJ 12310 / JCM 11189 / NBRC 100395).